Here is a 516-residue protein sequence, read N- to C-terminus: Putative fatty acyl-CoA reductase CG8306 (516 aa).

3 helical membrane passes run 356 to 376, 471 to 491, and 496 to 516; these read WVFRLSAILFHFIPAIILDLV, ILLGLHVALQLSFWYGVFKLI, and GISTAKAALVLPVLYYLFGLL.

The protein belongs to the fatty acyl-CoA reductase family.

It localises to the membrane. The catalysed reaction is a long-chain fatty acyl-CoA + 2 NADPH + 2 H(+) = a long-chain primary fatty alcohol + 2 NADP(+) + CoA. Its function is as follows. Catalyzes the reduction of C16 or C18 fatty acyl-CoA to fatty alcohols. This is Putative fatty acyl-CoA reductase CG8306 from Drosophila melanogaster (Fruit fly).